The primary structure comprises 156 residues: Ribosomal RNA large subunit methyltransferase H (156 aa).

S-adenosyl-L-methionine is bound by residues Leu-73, Gly-104, and Leu-123–Leu-128.

Belongs to the RNA methyltransferase RlmH family. Homodimer.

It is found in the cytoplasm. The catalysed reaction is pseudouridine(1915) in 23S rRNA + S-adenosyl-L-methionine = N(3)-methylpseudouridine(1915) in 23S rRNA + S-adenosyl-L-homocysteine + H(+). In terms of biological role, specifically methylates the pseudouridine at position 1915 (m3Psi1915) in 23S rRNA. This chain is Ribosomal RNA large subunit methyltransferase H, found in Shewanella putrefaciens (strain CN-32 / ATCC BAA-453).